Consider the following 332-residue polypeptide: Processive diacylglycerol alpha-glucosyltransferase (332 aa).

It belongs to the glycosyltransferase group 1 family. Glycosyltransferase 4 subfamily. Requires Mg(2+) as cofactor.

The protein resides in the cell membrane. The enzyme catalyses a 1,2-diacyl-sn-glycerol + UDP-alpha-D-glucose = a 1,2-diacyl-3-O-(alpha-D-glucopyranosyl)-sn-glycerol + UDP + H(+). The catalysed reaction is a 1,2-diacyl-3-O-(alpha-D-glucopyranosyl)-sn-glycerol + UDP-alpha-D-glucose = a 1,2-diacyl-3-O-[alpha-D-glucosyl-(1-&gt; 2)-alpha-D-glucosyl]-sn-glycerol + UDP + H(+). The protein operates within glycolipid metabolism; diglucosyl-diacylglycerol biosynthesis. With respect to regulation, activated by the negatively charged lipids phosphatidylglycerol (PG), cardiolipin (CL), nonbilayer-prone 1,3-DAG, 1,2-dioleoylphosphatidylglycerol (DOPG) and 1,2-dioleoylphosphatidylserine (DOPS). Inhibited by 1,2-diacyl-3-O-(alpha-D-galactopyranosyl)-sn-glycerol, 1,2-diacyl-3-O-[6-O-acyl(alpha-D-glucopyranosyl)]-sn-glycerol and 1,2-diacyl-3-O-[alpha-D-glucopyranosyl-(1-&gt;2)-O-(6-O-acyl-alpha-D-glucopyranosyl)]-sn-glycerol. Functionally, processive glucosyltransferase involved in the biosynthesis of both the non-bilayer-prone alpha-monoglucosyldiacylglycerol and the bilayer-forming membrane lipid alpha-diglucosyldiacylglycerol. These are major components for maintaining the anionic lipid surface charge density, for balancing the bilayer to non-bilayer phase equilibria and for keeping a constant lipid bilayer spontaneous curvature (curvature packing stress). Catalyzes the transfer of a glucosyl residue from UDP-Glc to diacylglycerol (DAG) acceptor to form the corresponding alpha-glucosyl-DAG (1,2-diacyl-3-O-(alpha-D-glucopyranosyl)-sn-glycerol), which then acts as acceptor to give alpha-diglucosyl-DAG product (3-O-(alpha-D-glucopyranosyl-alpha-(1-&gt;2)-D-glucopyranosyl)-1,2-diacyl-sn-glycerol). It can only use UDP-Glc as sugar donor. The polypeptide is Processive diacylglycerol alpha-glucosyltransferase (dgs) (Acholeplasma laidlawii).